We begin with the raw amino-acid sequence, 358 residues long: 3-isopropylmalate dehydrogenase (358 aa).

77 to 90 (GPKWTNLPPDQQPE) serves as a coordination point for NAD(+). Arginine 98, arginine 108, arginine 137, and aspartate 226 together coordinate substrate. 3 residues coordinate Mg(2+): aspartate 226, aspartate 250, and aspartate 254. 284 to 296 (GSAPDIAGKGIAN) contributes to the NAD(+) binding site.

It belongs to the isocitrate and isopropylmalate dehydrogenases family. LeuB type 1 subfamily. As to quaternary structure, homodimer. It depends on Mg(2+) as a cofactor. Requires Mn(2+) as cofactor.

Its subcellular location is the cytoplasm. It carries out the reaction (2R,3S)-3-isopropylmalate + NAD(+) = 4-methyl-2-oxopentanoate + CO2 + NADH. It functions in the pathway amino-acid biosynthesis; L-leucine biosynthesis; L-leucine from 3-methyl-2-oxobutanoate: step 3/4. Its function is as follows. Catalyzes the oxidation of 3-carboxy-2-hydroxy-4-methylpentanoate (3-isopropylmalate) to 3-carboxy-4-methyl-2-oxopentanoate. The product decarboxylates to 4-methyl-2 oxopentanoate. This chain is 3-isopropylmalate dehydrogenase (leuB), found in Haemophilus influenzae (strain ATCC 51907 / DSM 11121 / KW20 / Rd).